The following is a 189-amino-acid chain: Large ribosomal subunit protein uL5 (189 aa).

It belongs to the universal ribosomal protein uL5 family. As to quaternary structure, part of the 50S ribosomal subunit; part of the 5S rRNA/L5/L18/L25 subcomplex. Contacts the 5S rRNA and the P site tRNA. Forms a bridge to the 30S subunit in the 70S ribosome.

Its function is as follows. This is one of the proteins that bind and probably mediate the attachment of the 5S RNA into the large ribosomal subunit, where it forms part of the central protuberance. In the 70S ribosome it contacts protein S13 of the 30S subunit (bridge B1b), connecting the 2 subunits; this bridge is implicated in subunit movement. Contacts the P site tRNA; the 5S rRNA and some of its associated proteins might help stabilize positioning of ribosome-bound tRNAs. The protein is Large ribosomal subunit protein uL5 of Kocuria rhizophila (strain ATCC 9341 / DSM 348 / NBRC 103217 / DC2201).